The sequence spans 236 residues: 3-deoxy-D-manno-octulosonic acid kinase (236 aa).

Asp-167 is an active-site residue.

This sequence belongs to the protein kinase superfamily. KdkA/RfaP family.

It is found in the cell inner membrane. The enzyme catalyses an alpha-Kdo-(2-&gt;6)-lipid IVA + ATP = a 4-O-phospho-alpha-Kdo-(2-&gt;6)-lipid IVA + ADP + H(+). It functions in the pathway bacterial outer membrane biogenesis; LPS core biosynthesis. Catalyzes the ATP-dependent phosphorylation of the 3-deoxy-D-manno-octulosonic acid (Kdo) residue in Kdo-lipid IV(A) at the 4-OH position. The sequence is that of 3-deoxy-D-manno-octulosonic acid kinase from Vibrio vulnificus (strain YJ016).